Here is a 239-residue protein sequence, read N- to C-terminus: MAANSRKAAAILLSGGLDSMVTAAIAQEQGYAVHALTIDYGQRHKVELQSARLIAAKIGAERHVEIEADLRALGGSALTDDIDVPKCGVGNDIPVTYVPARNLVFLSLTTAFAEASGARDIFIGVNALDYSGYPDCRPEFIESFAVTANLATKAGVEESAPFKIHAPLQHMTKADIARECARLGLESAWSWSCYDPLPGLKPCGACDSCRLRRKGFAEAGLADGLDYPADAPPIQGENA.

Position 13–23 (13–23 (LSGGLDSMVTA)) interacts with ATP. Residues C193, C203, C206, and C209 each contribute to the Zn(2+) site.

It belongs to the QueC family. The cofactor is Zn(2+).

The enzyme catalyses 7-carboxy-7-deazaguanine + NH4(+) + ATP = 7-cyano-7-deazaguanine + ADP + phosphate + H2O + H(+). Its pathway is purine metabolism; 7-cyano-7-deazaguanine biosynthesis. Functionally, catalyzes the ATP-dependent conversion of 7-carboxy-7-deazaguanine (CDG) to 7-cyano-7-deazaguanine (preQ(0)). This Erythrobacter litoralis (strain HTCC2594) protein is 7-cyano-7-deazaguanine synthase.